The sequence spans 328 residues: tRNA uridine(34) hydroxylase (328 aa).

The 95-residue stretch at 130–224 (LDEDTVVLDT…YGKDPEVQGE (95 aa)) folds into the Rhodanese domain. Cysteine 184 (cysteine persulfide intermediate) is an active-site residue.

This sequence belongs to the TrhO family.

The catalysed reaction is uridine(34) in tRNA + AH2 + O2 = 5-hydroxyuridine(34) in tRNA + A + H2O. Functionally, catalyzes oxygen-dependent 5-hydroxyuridine (ho5U) modification at position 34 in tRNAs. The chain is tRNA uridine(34) hydroxylase from Streptococcus pyogenes serotype M3 (strain SSI-1).